A 220-amino-acid polypeptide reads, in one-letter code: Ribosomal RNA large subunit methyltransferase E (220 aa).

Over residues M1–K10 the composition is skewed to basic and acidic residues. A disordered region spans residues M1–R24. Residues G75, W77, D94, D110, and D134 each contribute to the S-adenosyl-L-methionine site. K174 serves as the catalytic Proton acceptor.

The protein belongs to the class I-like SAM-binding methyltransferase superfamily. RNA methyltransferase RlmE family.

The protein resides in the cytoplasm. The enzyme catalyses uridine(2552) in 23S rRNA + S-adenosyl-L-methionine = 2'-O-methyluridine(2552) in 23S rRNA + S-adenosyl-L-homocysteine + H(+). Specifically methylates the uridine in position 2552 of 23S rRNA at the 2'-O position of the ribose in the fully assembled 50S ribosomal subunit. In Erythrobacter litoralis (strain HTCC2594), this protein is Ribosomal RNA large subunit methyltransferase E.